The sequence spans 319 residues: Acetyl-coenzyme A carboxylase carboxyl transferase subunit alpha (319 aa).

Residues 35 to 296 enclose the CoA carboxyltransferase C-terminal domain; it reads NIDEEVHRLR…KAQLLEDLAD (262 aa).

Belongs to the AccA family. In terms of assembly, acetyl-CoA carboxylase is a heterohexamer composed of biotin carboxyl carrier protein (AccB), biotin carboxylase (AccC) and two subunits each of ACCase subunit alpha (AccA) and ACCase subunit beta (AccD).

Its subcellular location is the cytoplasm. The enzyme catalyses N(6)-carboxybiotinyl-L-lysyl-[protein] + acetyl-CoA = N(6)-biotinyl-L-lysyl-[protein] + malonyl-CoA. It functions in the pathway lipid metabolism; malonyl-CoA biosynthesis; malonyl-CoA from acetyl-CoA: step 1/1. In terms of biological role, component of the acetyl coenzyme A carboxylase (ACC) complex. First, biotin carboxylase catalyzes the carboxylation of biotin on its carrier protein (BCCP) and then the CO(2) group is transferred by the carboxyltransferase to acetyl-CoA to form malonyl-CoA. The chain is Acetyl-coenzyme A carboxylase carboxyl transferase subunit alpha from Salmonella arizonae (strain ATCC BAA-731 / CDC346-86 / RSK2980).